A 249-amino-acid polypeptide reads, in one-letter code: Type I iodothyronine deiodinase (249 aa).

The Extracellular portion of the chain corresponds to 1–12; the sequence is MGLPRPGLWLKR. The chain crosses the membrane as a helical; Signal-anchor for type III membrane protein span at residues 13–33; it reads LWVLVQVAVEVAVGKVLMTLF. Over 34-249 the chain is Cytoplasmic; it reads PERVKQNILA…VRAVLEELHS (216 aa). The active site involves U126. A non-standard amino acid (selenocysteine) is located at residue U126.

It belongs to the iodothyronine deiodinase family. Predominantly monomer. Can form homodimers but homodimerization is not essential for enzyme activity.

It localises to the cell membrane. Its subcellular location is the endoplasmic reticulum membrane. The protein localises to the basolateral cell membrane. It catalyses the reaction 3,3',5-triiodo-L-thyronine + iodide + A + H(+) = L-thyroxine + AH2. The catalysed reaction is 3,3',5'-triiodo-L-thyronine + iodide + A + H(+) = L-thyroxine + AH2. The enzyme catalyses 3,3'-diiodo-L-thyronine + iodide + A + H(+) = 3,3',5'-triiodo-L-thyronine + AH2. It carries out the reaction 3,3'-diiodo-L-thyronine + iodide + A + H(+) = 3,3',5-triiodo-L-thyronine + AH2. It catalyses the reaction 3'-iodo-L-thyronine + iodide + A + H(+) = 3',5'-diiodo-L-thyronine + AH2. The catalysed reaction is 3-iodo-L-thyronine + iodide + A + H(+) = 3,5-diiodo-L-thyronine + AH2. The enzyme catalyses 3-iodo-L-thyronine + iodide + A + H(+) = 3,3'-diiodo-L-thyronine + AH2. It carries out the reaction 3,3'-diiodothyronamine + iodide + A + H(+) = 3,3',5'-triiodothyronamine + AH2. It catalyses the reaction 3'-iodothyronamine + iodide + A + H(+) = 3',5'-diiodothyronamine + AH2. The catalysed reaction is 3-iodothyronamine + iodide + A + H(+) = 3,3'-diiodothyronamine + AH2. The enzyme catalyses 3,3'-diiodothyronamine + iodide + A + H(+) = 3,3',5-triiodothyronamine + AH2. It carries out the reaction 3-iodothyronamine + iodide + A + H(+) = 3,5-diiodothyronamine + AH2. It catalyses the reaction 3,3'-diiodo-L-thyronine sulfate + iodide + A + H(+) = 3,3',5'-triiodo-L-thyronine sulfate + AH2. The catalysed reaction is 3,3',5'-triiodo-L-thyronine sulfate + iodide + A + H(+) = L-thyroxine sulfate + AH2. The enzyme catalyses 3,3'-diiodo-L-thyronine sulfate + iodide + A + H(+) = 3,3',5-triiodo-L-thyronine sulfate + AH2. Its function is as follows. Plays a crucial role in the metabolism of thyroid hormones (TH) and has specific roles in TH activation and inactivation by deiodination. Catalyzes the deiodination of L-thyroxine (T4) to 3,5,3'-triiodothyronine (T3) via outer-ring deiodination (ORD) and of T4 to 3,3',5'-triiodothyronine (rT3) via inner-ring deiodination (IRD). Catalyzes the deiodiantion of rT3 to 3,3'-diiodothyronine (3,3'-T2) and 3',5'-diiodothyronine (3',5'-T2) to 3'-monoiodothyronine (3'-T1) via ORD. Catalyzes the deiodination of T3 to 3,3'-T2, 3,5-diiodothyronine (3,5-T2) to 3-monoiodothyronine (3-T1) and 3,3'-T2 to 3-T1 via IRD. Catalyzes the phenolic ring deiodinations of 3,3',5'-triiodothyronamine, 3',5'-diiodothyronamine and 3,3'-diiodothyronamine as well as tyrosyl ring deiodinations of 3,5,3'-triiodothyronamine and 3,5-diiodothyronamine. Catalyzes the deiodination of L-thyroxine sulfate and 3,3',5-triiodo-L-thyronine sulfate via IRD and of 3,3',5'-triiodo-L-thyronine sulfate via ORD. This chain is Type I iodothyronine deiodinase (DIO1), found in Oryctolagus cuniculus (Rabbit).